The following is a 574-amino-acid chain: Proline--tRNA ligase (574 aa).

This sequence belongs to the class-II aminoacyl-tRNA synthetase family. ProS type 1 subfamily. In terms of assembly, homodimer.

It localises to the cytoplasm. It catalyses the reaction tRNA(Pro) + L-proline + ATP = L-prolyl-tRNA(Pro) + AMP + diphosphate. In terms of biological role, catalyzes the attachment of proline to tRNA(Pro) in a two-step reaction: proline is first activated by ATP to form Pro-AMP and then transferred to the acceptor end of tRNA(Pro). As ProRS can inadvertently accommodate and process non-cognate amino acids such as alanine and cysteine, to avoid such errors it has two additional distinct editing activities against alanine. One activity is designated as 'pretransfer' editing and involves the tRNA(Pro)-independent hydrolysis of activated Ala-AMP. The other activity is designated 'posttransfer' editing and involves deacylation of mischarged Ala-tRNA(Pro). The misacylated Cys-tRNA(Pro) is not edited by ProRS. The polypeptide is Proline--tRNA ligase (Fervidobacterium nodosum (strain ATCC 35602 / DSM 5306 / Rt17-B1)).